The sequence spans 188 residues: GTP-dependent dephospho-CoA kinase (188 aa).

Aspartate 43, valine 44, aspartate 62, glutamate 121, and aspartate 144 together coordinate GTP.

This sequence belongs to the GTP-dependent DPCK family.

It carries out the reaction 3'-dephospho-CoA + GTP = GDP + CoA + H(+). Its pathway is cofactor biosynthesis; coenzyme A biosynthesis. Its function is as follows. Catalyzes the GTP-dependent phosphorylation of the 3'-hydroxyl group of dephosphocoenzyme A to form coenzyme A (CoA). This is GTP-dependent dephospho-CoA kinase from Methanococcoides burtonii (strain DSM 6242 / NBRC 107633 / OCM 468 / ACE-M).